The following is a 963-amino-acid chain: MADPAECNIKVMCRFRPLNESEVNRGDKYVAKFQGEDTVMIASKPYAFDRVFQSSTSQEQVYNDCAKKIVKDVLEGYNGTIFAYGQTSSGKTHTMEGKLHDPEGMGIIPRIVQDIFNYIYSMDENLEFHIKVSYFEIYLDKIRDLLDVSKTNLSVHEDKNRVPYVKGCTERFVCSPDEVMDTIDEGKSNRHVAVTNMNEHSSRSHSIFLINVKQENTQTEQKLSGKLYLVDLAGSEKVSKTGAEGAVLDEAKNINKSLSALGNVISALAEGSTYVPYRDSKMTRILQDSLGGNCRTTIVICCSPSSYNESETKSTLLFGQRAKTIKNTVCVNVELTAEQWKKKYEKEKEKNKTLRNTIQWLENELNRWRNGETVPIDEQFDKEKANLEAFTADKDVAITNDKPAAAIGMAGSFTDAERRKCEEEIAKLYKQLDDKDEEINQQSQLVEKLKTQMLDQEELLASTRRDQDNMQAELNRLQAENDASKEEVKEVLQALEELAVNYDQKSQEVEDKTKEYELLSDELNQKSATLASIDAELQKLKEMTNHQKKRAAEMMASLLKDLAEIGIAVGNNDVKQPEGTGMIDEEFTVARLYISKMKSEVKTMVKRCKQLESTQTESNKKMEENEKELAACQLRISQHEAKIKSLTEYLQNVEQKKRQLEESVDSLGEELVQLRAQEKVHEMEKEHLNKVQTANEVKQAVEQQIQSHRETHQKQISSLRDEVEAKEKLITDLQDQNQKMVLEQERLRVEHERLKAVDQEKSRKLHELTVMQDRREQARQDLKGLEETVAKELQTLHNLRKLFVQDLATRVKKSAEVDSDDTGGSAAQKQKISFLENNLEQLTKVHKQLVRDNADLRCELPKLEKRLRATAERVKALESALKEAKENASRDRKRYQQEVDRIKEAVRSKNMARRGHSAQIAKPIRPGQHPAASPTHPGAVRGGGSFVQNNQPVGLRGGGGKQA.

N-acetylalanine is present on alanine 2. The region spanning 8–325 (NIKVMCRFRP…LLFGQRAKTI (318 aa)) is the Kinesin motor domain. Residue 85–92 (GQTSSGKT) coordinates ATP. A Glycyl lysine isopeptide (Lys-Gly) (interchain with G-Cter in SUMO2) cross-link involves residue lysine 213. The stretch at 330–913 (CVNVELTAEQ…EAVRSKNMAR (584 aa)) forms a coiled coil. Residues 908-963 (SKNMARRGHSAQIAKPIRPGQHPAASPTHPGAVRGGGSFVQNNQPVGLRGGGGKQA) are disordered. Positions 915 to 963 (GHSAQIAKPIRPGQHPAASPTHPGAVRGGGSFVQNNQPVGLRGGGGKQA) are globular. Residues serine 933 and serine 945 each carry the phosphoserine modification. Arginine 956 carries the post-translational modification Omega-N-methylarginine.

This sequence belongs to the TRAFAC class myosin-kinesin ATPase superfamily. Kinesin family. Kinesin subfamily. Oligomer composed of two heavy chains and two light chains. Interacts with GRIP1 and PPP1R42. Interacts with SYBU. Interacts with JAKMIP1. Interacts with PLEKHM2. Interacts with ECPAS. Interacts with ZFYVE27. Found in a complex with OGT, RHOT1, RHOT2 and TRAK1. Interacts with APP (via cytoplasmic domain). In terms of tissue distribution, expressed in the brain (at protein level). Expressed in the brain, liver, kidney, spleen, heart, lung and sciatic nerve.

Its subcellular location is the cytoplasm. It is found in the cytoskeleton. It localises to the cytolytic granule membrane. The protein resides in the lysosome membrane. Its function is as follows. Microtubule-dependent motor required for normal distribution of mitochondria and lysosomes. Can induce formation of neurite-like membrane protrusions in non-neuronal cells in a ZFYVE27-dependent manner. Regulates centrosome and nuclear positioning during mitotic entry. During the G2 phase of the cell cycle in a BICD2-dependent manner, antagonizes dynein function and drives the separation of nuclei and centrosomes. Required for anterograde axonal transportation of MAPK8IP3/JIP3 which is essential for MAPK8IP3/JIP3 function in axon elongation. Through binding with PLEKHM2 and ARL8B, directs lysosome movement toward microtubule plus ends. Involved in NK cell-mediated cytotoxicity. Drives the polarization of cytolytic granules and microtubule-organizing centers (MTOCs) toward the immune synapse between effector NK lymphocytes and target cells. This chain is Kinesin-1 heavy chain, found in Rattus norvegicus (Rat).